The chain runs to 173 residues: PTS system glucose-specific EIIA component (173 aa).

A PTS EIIA type-1 domain is found at 40–144 (DPTFAQKMMG…STVTPVVVTN (105 aa)). His-77 and His-92 together coordinate Zn(2+). His-92 (tele-phosphohistidine intermediate; for EIIA activity) is an active-site residue. His-92 is modified (phosphohistidine; by HPr).

In terms of assembly, heterodimer with glycerol kinase (glpk). It depends on Zn(2+) as a cofactor.

It localises to the cytoplasm. In terms of biological role, the phosphoenolpyruvate-dependent sugar phosphotransferase system (sugar PTS), a major carbohydrate active transport system, catalyzes the phosphorylation of incoming sugar substrates concomitantly with their translocation across the cell membrane. The enzyme II complex composed of PtsG and Crr is involved in glucose transport. The polypeptide is PTS system glucose-specific EIIA component (crr) (Halalkalibacterium halodurans (strain ATCC BAA-125 / DSM 18197 / FERM 7344 / JCM 9153 / C-125) (Bacillus halodurans)).